The following is a 228-amino-acid chain: MKFAVVVFPGSNCDVDMYHAIADELGEEVEYVWHDEDNLDRFDAVLLPGGFSYGDYLRSGAIARFSKVMAAVKKAAEAGKPVLGVCNGFQILLEAGLLPGAMRRNQGLKFICRPVQLTVENHETMFTSAYEKGEVITIPIAHGEGNYYCDEQTLERLVENRQIVFRYHGENPNGSLADIAGIVNEQGNVLGMMPHPERAVDALLGSADGLKLFRSIVNYWRETHVVTA.

The 223-residue stretch at 4-226 (AVVVFPGSNC…VNYWRETHVV (223 aa)) folds into the Glutamine amidotransferase type-1 domain. Cys86 serves as the catalytic Nucleophile. Active-site residues include His195 and Glu197.

Part of the FGAM synthase complex composed of 1 PurL, 1 PurQ and 2 PurS subunits.

It localises to the cytoplasm. The enzyme catalyses N(2)-formyl-N(1)-(5-phospho-beta-D-ribosyl)glycinamide + L-glutamine + ATP + H2O = 2-formamido-N(1)-(5-O-phospho-beta-D-ribosyl)acetamidine + L-glutamate + ADP + phosphate + H(+). The catalysed reaction is L-glutamine + H2O = L-glutamate + NH4(+). It functions in the pathway purine metabolism; IMP biosynthesis via de novo pathway; 5-amino-1-(5-phospho-D-ribosyl)imidazole from N(2)-formyl-N(1)-(5-phospho-D-ribosyl)glycinamide: step 1/2. Functionally, part of the phosphoribosylformylglycinamidine synthase complex involved in the purines biosynthetic pathway. Catalyzes the ATP-dependent conversion of formylglycinamide ribonucleotide (FGAR) and glutamine to yield formylglycinamidine ribonucleotide (FGAM) and glutamate. The FGAM synthase complex is composed of three subunits. PurQ produces an ammonia molecule by converting glutamine to glutamate. PurL transfers the ammonia molecule to FGAR to form FGAM in an ATP-dependent manner. PurS interacts with PurQ and PurL and is thought to assist in the transfer of the ammonia molecule from PurQ to PurL. The sequence is that of Phosphoribosylformylglycinamidine synthase subunit PurQ from Geobacillus kaustophilus (strain HTA426).